A 774-amino-acid chain; its full sequence is Lon protease 1 (774 aa).

The Lon N-terminal domain maps to 9 to 202; that stretch reads IPLLPLRGLL…KVIDFINNEK (194 aa). 354–361 contributes to the ATP binding site; that stretch reads GPPGVGKT. Positions 590-771 constitute a Lon proteolytic domain; it reads EDQVGVVTGL…DEVLEHALVG (182 aa). Catalysis depends on residues serine 677 and lysine 720.

Belongs to the peptidase S16 family. In terms of assembly, homohexamer. Organized in a ring with a central cavity. Exists as a mixture of small oligomeric species in solution.

The protein localises to the cytoplasm. The catalysed reaction is Hydrolysis of proteins in presence of ATP.. Its function is as follows. ATP-dependent serine protease that mediates the selective degradation of mutant and abnormal proteins as well as certain short-lived regulatory proteins. Required for cellular homeostasis and for survival from DNA damage and developmental changes induced by stress. Degrades polypeptides processively to yield small peptide fragments that are 5 to 10 amino acids long. Binds to DNA in a double-stranded, site-specific manner. Has been implicated in preventing sigma(G) activity under non-sporulation conditions. The sequence is that of Lon protease 1 from Bacillus subtilis (strain 168).